We begin with the raw amino-acid sequence, 313 residues long: Pantothenate synthetase (313 aa).

43–50 (MGALHEGH) provides a ligand contact to ATP. Histidine 50 (proton donor) is an active-site residue. (R)-pantoate is bound at residue glutamine 75. Glutamine 75 provides a ligand contact to beta-alanine. 161 to 164 (GEKD) contacts ATP. (R)-pantoate is bound at residue glutamine 167. ATP contacts are provided by residues valine 190 and 198 to 201 (LSSR).

This sequence belongs to the pantothenate synthetase family. In terms of assembly, homodimer.

The protein localises to the cytoplasm. It carries out the reaction (R)-pantoate + beta-alanine + ATP = (R)-pantothenate + AMP + diphosphate + H(+). Its pathway is cofactor biosynthesis; (R)-pantothenate biosynthesis; (R)-pantothenate from (R)-pantoate and beta-alanine: step 1/1. Its function is as follows. Catalyzes the condensation of pantoate with beta-alanine in an ATP-dependent reaction via a pantoyl-adenylate intermediate. The polypeptide is Pantothenate synthetase (Mycobacterium sp. (strain JLS)).